We begin with the raw amino-acid sequence, 32 residues long: Photosystem II reaction center protein Z (32 aa).

The chain crosses the membrane as a helical span at residues 12–32 (FGAAAWIGLVLLVGTLYYFVV).

The protein belongs to the PsbZ family. In terms of assembly, PSII is composed of 1 copy each of membrane proteins PsbA, PsbB, PsbC, PsbD, PsbE, PsbF, PsbH, PsbI, PsbJ, PsbK, PsbL, PsbM, PsbT, PsbY, PsbZ, Psb30/Ycf12, at least 3 peripheral proteins of the oxygen-evolving complex and a large number of cofactors. It forms dimeric complexes.

It localises to the plastid. It is found in the chloroplast thylakoid membrane. Its function is as follows. May control the interaction of photosystem II (PSII) cores with the light-harvesting antenna, regulates electron flow through the 2 photosystem reaction centers. PSII is a light-driven water plastoquinone oxidoreductase, using light energy to abstract electrons from H(2)O, generating a proton gradient subsequently used for ATP formation. The sequence is that of Photosystem II reaction center protein Z from Euglena granulata.